The chain runs to 180 residues: Fucolectin-3 (180 aa).

The signal sequence occupies residues 1 to 22; that stretch reads MEVKMIILLFQILAISTLKSDS. Residues 31-179 are F5/8 type C-like; the sequence is QENVALRGRA…VEVNVLFPAP (149 aa). Residues Asn-58, Asp-61, Asn-63, and Ser-72 each coordinate Ca(2+). 3 disulfides stabilise this stretch: Cys-73-Cys-168, Cys-104-Cys-105, and Cys-130-Cys-146. Positions 75 and 101 each coordinate alpha-L-fucose. Residues 101 to 103 carry the Cell attachment site motif; it reads RGD. Arg-108 contributes to the alpha-L-fucose binding site. Ca(2+) contacts are provided by Cys-168 and Glu-169.

The protein belongs to the fucolectin family. As to quaternary structure, homotrimer. In terms of tissue distribution, parenchymal hepatocytes.

The protein localises to the secreted. It is found in the extracellular space. In terms of biological role, acts as a defensive agent. Recognizes blood group fucosylated oligosaccharides including A, B, H and Lewis B-type antigens. Does not recognize Lewis A antigen and has low affinity for monovalent haptens. In Anguilla japonica (Japanese eel), this protein is Fucolectin-3.